Consider the following 158-residue polypeptide: 2-C-methyl-D-erythritol 2,4-cyclodiphosphate synthase (158 aa).

A divalent metal cation-binding residues include aspartate 8 and histidine 10. 4-CDP-2-C-methyl-D-erythritol 2-phosphate-binding positions include 8-10 (DVH) and 34-35 (HS). Histidine 42 lines the a divalent metal cation pocket. 4-CDP-2-C-methyl-D-erythritol 2-phosphate is bound by residues 56–58 (DIG), 61–65 (FPDTD), 100–106 (AQKPKML), 132–135 (TTEE), phenylalanine 139, and lysine 142.

It belongs to the IspF family. In terms of assembly, homotrimer. It depends on a divalent metal cation as a cofactor.

The catalysed reaction is 4-CDP-2-C-methyl-D-erythritol 2-phosphate = 2-C-methyl-D-erythritol 2,4-cyclic diphosphate + CMP. Its pathway is isoprenoid biosynthesis; isopentenyl diphosphate biosynthesis via DXP pathway; isopentenyl diphosphate from 1-deoxy-D-xylulose 5-phosphate: step 4/6. In terms of biological role, involved in the biosynthesis of isopentenyl diphosphate (IPP) and dimethylallyl diphosphate (DMAPP), two major building blocks of isoprenoid compounds. Catalyzes the conversion of 4-diphosphocytidyl-2-C-methyl-D-erythritol 2-phosphate (CDP-ME2P) to 2-C-methyl-D-erythritol 2,4-cyclodiphosphate (ME-CPP) with a corresponding release of cytidine 5-monophosphate (CMP). The polypeptide is 2-C-methyl-D-erythritol 2,4-cyclodiphosphate synthase (Clostridium tetani (strain Massachusetts / E88)).